The chain runs to 690 residues: Eukaryotic translation initiation factor 3 subunit B (690 aa).

Residues 1–11 (MAKKKSEEHSG) show a composition bias toward basic and acidic residues. The tract at residues 1 to 36 (MAKKKSEEHSGADANDSDYQEEPNFEDPPGFVDNIS) is disordered. Over residues 15-25 (NDSDYQEEPNF) the composition is skewed to acidic residues. In terms of domain architecture, RRM spans 57 to 141 (SVVVVDNIPK…HTFAVNLFTD (85 aa)). WD repeat units lie at residues 207–246 (TRER…KIQK), 293–331 (DGMS…LLDL), 334–369 (IKIP…TLME), 442–484 (EIRE…KPSL), and 530–575 (PDHF…IKRT). The stretch at 595–645 (EEKQKEIKKNLKKYYAAFEQKDRLRLTRASKELLEKRSQLRETFMEYRNKR) forms a coiled coil.

This sequence belongs to the eIF-3 subunit B family. Component of the eukaryotic translation initiation factor 3 (eIF-3) complex. The eIF-3 complex interacts with pix. Interacts with mxt.

It is found in the cytoplasm. RNA-binding component of the eukaryotic translation initiation factor 3 (eIF-3) complex, which is involved in protein synthesis of a specialized repertoire of mRNAs and, together with other initiation factors, stimulates binding of mRNA and methionyl-tRNAi to the 40S ribosome. The eIF-3 complex specifically targets and initiates translation of a subset of mRNAs involved in cell proliferation. In Drosophila simulans (Fruit fly), this protein is Eukaryotic translation initiation factor 3 subunit B.